Here is a 304-residue protein sequence, read N- to C-terminus: Secreted mono- and diacylglycerol lipase MDL4 (304 aa).

An N-terminal signal peptide occupies residues methionine 1–alanine 19. Cysteines 55 and 297 form a disulfide. Residues asparagine 102 and asparagine 161 are each glycosylated (N-linked (GlcNAc...) asparagine). The active-site Nucleophile is serine 171. Aspartate 228 is an active-site residue. Asparagine 253 carries an N-linked (GlcNAc...) asparagine glycan. Residue histidine 281 is part of the active site.

The protein belongs to the AB hydrolase superfamily. Lipase family. Class 3 subfamily.

Its subcellular location is the secreted. The protein resides in the cell wall. The enzyme catalyses a monoacylglycerol + H2O = glycerol + a fatty acid + H(+). It catalyses the reaction a diacylglycerol + H2O = a monoacylglycerol + a fatty acid + H(+). Its function is as follows. Secreted lipase involved in Dandruff and seborrheic dermatitis (D/SD) probably via lipase-mediated breakdown of sebaceous lipids and release of irritating free fatty acids. Shows activity against monoglyceride and diglyceride substrates, but not triglyceride substrates and does not exhibit regio-selective production of diacylglycerols. Cleaves oleic acid from 1,2 isomers of diolein on both the 1 and the 2 position of the glycerol backbone, resulting mainly in free fatty acids but no monoolein is detected. Shows activity on monoolein and liberates mostly free fatty acids, but can also perform the reverse reaction and produce diolein. The protein is Secreted mono- and diacylglycerol lipase MDL4 of Malassezia globosa (strain ATCC MYA-4612 / CBS 7966) (Dandruff-associated fungus).